The chain runs to 370 residues: Forkhead box protein I1-A (370 aa).

Disordered stretches follow at residues 1–28 (MNPVQQPAQHKCPASSLNPPHPKRAQEA), 212–269 (DNGN…CPSP), and 342–370 (SSLPTSNQKQPPYLQQLHPQQSPLYQGRY). A DNA-binding region (fork-head) is located at residues 127 to 221 (RPPYSYSALI…DNGNFRRKRK (95 aa)). Positions 232-245 (AKREEDHVSPKGKE) are enriched in basic and acidic residues. Low complexity predominate over residues 349–370 (QKQPPYLQQLHPQQSPLYQGRY).

Initially localized to the animal hemisphere (the presumptive ectoderm) of early-mid blastula embryos. Becomes restricted to head placodes, excluding the otic placodes, by the tailbud stages.

The protein localises to the nucleus. Transcription factor. Essential for ventral specification of the early cephalic (head) ectoderm during gastrulation, playing a role in the non-neural versus neural cell fate choice. Binds to DNA via the target sequence 5'-[AG]TAAA[CT]A-3', with 5'-ATAAACA-3' being the preferred binding site. In Xenopus laevis (African clawed frog), this protein is Forkhead box protein I1-A (foxi1-a).